A 377-amino-acid chain; its full sequence is uncharacterized protein (377 aa).

4 consecutive transmembrane segments (helical) span residues 26–46 (TFQN…VVAI), 67–87 (TVGS…WVII), 108–128 (FLTF…ISLT), and 135–155 (IDYG…ALYI).

The protein resides in the cell membrane. This is an uncharacterized protein from Methanocaldococcus jannaschii (strain ATCC 43067 / DSM 2661 / JAL-1 / JCM 10045 / NBRC 100440) (Methanococcus jannaschii).